The primary structure comprises 469 residues: NADH-quinone oxidoreductase subunit N (469 aa).

14 consecutive transmembrane segments (helical) span residues 2 to 22, 28 to 48, 70 to 90, 101 to 121, 122 to 142, 157 to 177, 194 to 214, 233 to 253, 261 to 281, 290 to 310, 315 to 335, 361 to 381, 398 to 418, and 447 to 467; these read IALL…FLCV, RYSI…FFIV, FSFC…ISSF, EMFA…LSVE, LILT…MIAM, FLLS…VFGV, FLSI…IAIF, GFLA…LCFL, ILQG…NLLS, ILIA…SSVG, IYPA…LFAI, AFAF…VGFL, LAIF…KIII, and ILFI…LNLF.

Belongs to the complex I subunit 2 family. NDH-1 is composed of 14 different subunits. Subunits NuoA, H, J, K, L, M, N constitute the membrane sector of the complex.

The protein localises to the cell inner membrane. It catalyses the reaction a quinone + NADH + 5 H(+)(in) = a quinol + NAD(+) + 4 H(+)(out). Its function is as follows. NDH-1 shuttles electrons from NADH, via FMN and iron-sulfur (Fe-S) centers, to quinones in the respiratory chain. The immediate electron acceptor for the enzyme in this species is believed to be ubiquinone. Couples the redox reaction to proton translocation (for every two electrons transferred, four hydrogen ions are translocated across the cytoplasmic membrane), and thus conserves the redox energy in a proton gradient. The sequence is that of NADH-quinone oxidoreductase subunit N from Campylobacter fetus subsp. fetus (strain 82-40).